We begin with the raw amino-acid sequence, 161 residues long: MNSKISVSNLDSNVIDIITRILKSQSNTDVDNATDIIIGAISKNILTLQDDRDLSSIKQIFQSINDSECAFIGRQIDNEIVFTVQDIAMYLARDTFNPLNNDVNTFIKYSWSSYSNKQGTNEKRDTINIVIKNQNVETYTYTKIDLPYLLVHVARYLSIFN.

This sequence belongs to the mimivirus L761/L899 family.

It localises to the virion. This is an uncharacterized protein from Acanthamoeba polyphaga (Amoeba).